The following is a 104-amino-acid chain: MAAKIKKGDRVVVLAGKDKGKQGAVTQVLVKANRVLVQGVNLVQRHTKATQADPQGGIKSKEAALHVSNVAIVDSKGKPTRVGFKIEGDKKVRFAKTTGEVING.

Belongs to the universal ribosomal protein uL24 family. Part of the 50S ribosomal subunit.

Functionally, one of two assembly initiator proteins, it binds directly to the 5'-end of the 23S rRNA, where it nucleates assembly of the 50S subunit. In terms of biological role, one of the proteins that surrounds the polypeptide exit tunnel on the outside of the subunit. This is Large ribosomal subunit protein uL24 from Caulobacter sp. (strain K31).